A 155-amino-acid polypeptide reads, in one-letter code: Ribosome maturation factor RimP (155 aa).

This sequence belongs to the RimP family.

It localises to the cytoplasm. Required for maturation of 30S ribosomal subunits. The polypeptide is Ribosome maturation factor RimP (Hamiltonella defensa subsp. Acyrthosiphon pisum (strain 5AT)).